Here is a 33-residue protein sequence, read N- to C-terminus: Cytochrome b6-f complex subunit 8 (33 aa).

Residues 2 to 22 (IFTLGWASLAAIFTFSIAMVV) traverse the membrane as a helical segment.

The protein belongs to the PetN family. In terms of assembly, the 4 large subunits of the cytochrome b6-f complex are cytochrome b6, subunit IV (17 kDa polypeptide, PetD), cytochrome f and the Rieske protein, while the 4 small subunits are PetG, PetL, PetM and PetN. The complex functions as a dimer.

The protein localises to the cellular thylakoid membrane. Component of the cytochrome b6-f complex, which mediates electron transfer between photosystem II (PSII) and photosystem I (PSI), cyclic electron flow around PSI, and state transitions. This chain is Cytochrome b6-f complex subunit 8, found in Prochlorococcus marinus (strain NATL2A).